The sequence spans 344 residues: Methionine import ATP-binding protein MetN (344 aa).

Positions 2-241 constitute an ABC transporter domain; sequence IEINRVNKIF…PKTALAQEFI (240 aa). 38–45 is a binding site for ATP; the sequence is GSSGAGKS.

This sequence belongs to the ABC transporter superfamily. Methionine importer (TC 3.A.1.24) family. The complex is composed of two ATP-binding proteins (MetN), two transmembrane proteins (MetI) and a solute-binding protein (MetQ).

The protein localises to the cell inner membrane. The enzyme catalyses L-methionine(out) + ATP + H2O = L-methionine(in) + ADP + phosphate + H(+). The catalysed reaction is D-methionine(out) + ATP + H2O = D-methionine(in) + ADP + phosphate + H(+). In terms of biological role, part of the ABC transporter complex MetNIQ involved in methionine import. Responsible for energy coupling to the transport system. The chain is Methionine import ATP-binding protein MetN from Aliivibrio fischeri (strain ATCC 700601 / ES114) (Vibrio fischeri).